The chain runs to 428 residues: Light-independent protochlorophyllide reductase subunit N (428 aa).

[4Fe-4S] cluster contacts are provided by Cys-31, Cys-56, and Cys-117.

Belongs to the BchN/ChlN family. In terms of assembly, protochlorophyllide reductase is composed of three subunits; BchL, BchN and BchB. Forms a heterotetramer of two BchB and two BchN subunits. It depends on [4Fe-4S] cluster as a cofactor.

It carries out the reaction chlorophyllide a + oxidized 2[4Fe-4S]-[ferredoxin] + 2 ADP + 2 phosphate = protochlorophyllide a + reduced 2[4Fe-4S]-[ferredoxin] + 2 ATP + 2 H2O. It participates in porphyrin-containing compound metabolism; bacteriochlorophyll biosynthesis (light-independent). In terms of biological role, component of the dark-operative protochlorophyllide reductase (DPOR) that uses Mg-ATP and reduced ferredoxin to reduce ring D of protochlorophyllide (Pchlide) to form chlorophyllide a (Chlide). This reaction is light-independent. The NB-protein (BchN-BchB) is the catalytic component of the complex. The sequence is that of Light-independent protochlorophyllide reductase subunit N from Rhodopseudomonas palustris (strain HaA2).